Consider the following 822-residue polypeptide: Stemar-13-ene synthase (822 aa).

Positions 1 to 10 are enriched in polar residues; it reads MMLLSSSYSG. Positions 1–29 are disordered; it reads MMLLSSSYSGGQFPGVSPLGTRPKRSTTV. Positions 553, 557, 698, 702, and 706 each coordinate Mg(2+). The DDXXD motif motif lies at 553–557; it reads DDLFD.

Belongs to the terpene synthase family. The cofactor is Mg(2+).

It carries out the reaction 9alpha-copalyl diphosphate = stemar-13-ene + diphosphate. Catalyzes the conversion of syn-copalyl diphosphate to the phytoalexin precursor stemarene. The chain is Stemar-13-ene synthase (KSL8) from Oryza sativa subsp. japonica (Rice).